Here is a 308-residue protein sequence, read N- to C-terminus: MLNPSDFIEEAVEEIRSTVGNEKAIIALSGGVDSSVASVLAGRAIGDNLTAVFVDHGLLREGEAEYVRKTFSERLNFRYIDASEEFLKELEGVTDPEEKRKIIGRVFIEVFERVAEEIGARYLVQGTIAPDWIESEGQIKSHHNVALPHGLVLEIVEPIRELYKDEVREIGLELGLPREMIQRQPFPGPGLAVRIVGEITREKIEICRRANAIVEEEVVESGLHESLWQYFAVLTDTMVTGVKGDVRDFGYLVVIRMVESLDAMTASVPELPWDLIKRISKRITAEIPEVTHVALSVSDKPPSTIEFA.

In terms of domain architecture, GMPS ATP-PPase spans 2 to 183 (LNPSDFIEEA…LGLPREMIQR (182 aa)). 29–35 (SGGVDSS) provides a ligand contact to ATP.

In terms of assembly, heterodimer composed of a glutamine amidotransferase subunit (A) and a GMP-binding subunit (B).

The catalysed reaction is XMP + L-glutamine + ATP + H2O = GMP + L-glutamate + AMP + diphosphate + 2 H(+). The protein operates within purine metabolism; GMP biosynthesis; GMP from XMP (L-Gln route): step 1/1. Its function is as follows. Catalyzes the synthesis of GMP from XMP. This Methanothermobacter thermautotrophicus (strain ATCC 29096 / DSM 1053 / JCM 10044 / NBRC 100330 / Delta H) (Methanobacterium thermoautotrophicum) protein is GMP synthase [glutamine-hydrolyzing] subunit B (guaAB).